Reading from the N-terminus, the 344-residue chain is N-acetyl-gamma-glutamyl-phosphate reductase (344 aa).

Cys-148 is an active-site residue.

The protein belongs to the NAGSA dehydrogenase family. Type 1 subfamily.

The protein resides in the cytoplasm. It carries out the reaction N-acetyl-L-glutamate 5-semialdehyde + phosphate + NADP(+) = N-acetyl-L-glutamyl 5-phosphate + NADPH + H(+). It functions in the pathway amino-acid biosynthesis; L-arginine biosynthesis; N(2)-acetyl-L-ornithine from L-glutamate: step 3/4. In terms of biological role, catalyzes the NADPH-dependent reduction of N-acetyl-5-glutamyl phosphate to yield N-acetyl-L-glutamate 5-semialdehyde. The chain is N-acetyl-gamma-glutamyl-phosphate reductase from Clostridium kluyveri (strain NBRC 12016).